A 217-amino-acid chain; its full sequence is Ribonuclease HII (217 aa).

Positions 27-216 (SQVAGVDEAG…VKESIQEGVC (190 aa)) constitute an RNase H type-2 domain. A divalent metal cation contacts are provided by Asp-33, Glu-34, and Asp-126.

Belongs to the RNase HII family. The cofactor is Mn(2+). Requires Mg(2+) as cofactor.

It is found in the cytoplasm. It carries out the reaction Endonucleolytic cleavage to 5'-phosphomonoester.. In terms of biological role, endonuclease that specifically degrades the RNA of RNA-DNA hybrids. This is Ribonuclease HII from Chlamydia trachomatis serovar L2 (strain ATCC VR-902B / DSM 19102 / 434/Bu).